A 249-amino-acid polypeptide reads, in one-letter code: RNA-free ribonuclease P (249 aa).

The tract at residues 226–249 is disordered; sequence NENEPEYENRDKSKEGSSGEIEFI. The segment covering 232–242 has biased composition (basic and acidic residues); the sequence is YENRDKSKEGS.

The protein belongs to the HARP family.

The catalysed reaction is Endonucleolytic cleavage of RNA, removing 5'-extranucleotides from tRNA precursor.. Functionally, RNA-free RNase P that catalyzes the removal of the 5'-leader sequence from pre-tRNA to produce the mature 5'-terminus. This chain is RNA-free ribonuclease P, found in Methanosarcina barkeri (strain Fusaro / DSM 804).